A 74-amino-acid chain; its full sequence is Translation initiation factor IF-1 (74 aa).

The 72-residue stretch at 1-72 folds into the S1-like domain; it reads MAKETEMEFE…TRGRITYRKI (72 aa).

The protein belongs to the IF-1 family. As to quaternary structure, component of the 30S ribosomal translation pre-initiation complex which assembles on the 30S ribosome in the order IF-2 and IF-3, IF-1 and N-formylmethionyl-tRNA(fMet); mRNA recruitment can occur at any time during PIC assembly.

Its subcellular location is the cytoplasm. Its function is as follows. One of the essential components for the initiation of protein synthesis. Stabilizes the binding of IF-2 and IF-3 on the 30S subunit to which N-formylmethionyl-tRNA(fMet) subsequently binds. Helps modulate mRNA selection, yielding the 30S pre-initiation complex (PIC). Upon addition of the 50S ribosomal subunit IF-1, IF-2 and IF-3 are released leaving the mature 70S translation initiation complex. The polypeptide is Translation initiation factor IF-1 (Mycoplasma capricolum subsp. capricolum (strain California kid / ATCC 27343 / NCTC 10154)).